Reading from the N-terminus, the 37-residue chain is Cytochrome b6-f complex subunit 5 (37 aa).

Residues 5–25 (LLSGIVLGLVPVTIAGLFVTA) traverse the membrane as a helical segment.

Belongs to the PetG family. The 4 large subunits of the cytochrome b6-f complex are cytochrome b6, subunit IV (17 kDa polypeptide, PetD), cytochrome f and the Rieske protein, while the 4 small subunits are PetG, PetL, PetM and PetN. The complex functions as a dimer.

The protein resides in the plastid. The protein localises to the chloroplast thylakoid membrane. In terms of biological role, component of the cytochrome b6-f complex, which mediates electron transfer between photosystem II (PSII) and photosystem I (PSI), cyclic electron flow around PSI, and state transitions. PetG is required for either the stability or assembly of the cytochrome b6-f complex. The polypeptide is Cytochrome b6-f complex subunit 5 (Chlorella vulgaris (Green alga)).